Here is a 69-residue protein sequence, read N- to C-terminus: ATP synthase F(0) complex subunit e, mitochondrial (69 aa).

K34 bears the N6-acetyllysine mark.

The protein belongs to the ATPase e subunit family. Component of the ATP synthase complex composed at least of ATP5F1A/subunit alpha, ATP5F1B/subunit beta, ATP5MC1/subunit c (homooctomer), MT-ATP6/subunit a, MT-ATP8/subunit 8, ATP5ME/subunit e, ATP5MF/subunit f, ATP5MG/subunit g, ATP5MK/subunit k, ATP5MJ/subunit j, ATP5F1C/subunit gamma, ATP5F1D/subunit delta, ATP5F1E/subunit epsilon, ATP5PF/subunit F6, ATP5PB/subunit b, ATP5PD/subunit d, ATP5PO/subunit OSCP. ATP synthase complex consists of a soluble F(1) head domain (subunits alpha(3) and beta(3)) - the catalytic core - and a membrane F(0) domain - the membrane proton channel (subunits c, a, 8, e, f, g, k and j). These two domains are linked by a central stalk (subunits gamma, delta, and epsilon) rotating inside the F1 region and a stationary peripheral stalk (subunits F6, b, d, and OSCP).

It localises to the mitochondrion. The protein localises to the mitochondrion inner membrane. Functionally, subunit e, of the mitochondrial membrane ATP synthase complex (F(1)F(0) ATP synthase or Complex V) that produces ATP from ADP in the presence of a proton gradient across the membrane which is generated by electron transport complexes of the respiratory chain. ATP synthase complex consist of a soluble F(1) head domain - the catalytic core - and a membrane F(1) domain - the membrane proton channel. These two domains are linked by a central stalk rotating inside the F(1) region and a stationary peripheral stalk. During catalysis, ATP synthesis in the catalytic domain of F(1) is coupled via a rotary mechanism of the central stalk subunits to proton translocation. In vivo, can only synthesize ATP although its ATP hydrolase activity can be activated artificially in vitro. Part of the complex F(0) domain. In Cricetulus longicaudatus (Long-tailed dwarf hamster), this protein is ATP synthase F(0) complex subunit e, mitochondrial.